Consider the following 347-residue polypeptide: NADH-ubiquinone oxidoreductase chain 2 (347 aa).

Transmembrane regions (helical) follow at residues 3-23, 25-45, 59-79, 96-116, 122-142, 149-169, 178-198, 200-220, 240-260, 276-296, and 326-346; these read PLIFTMILLTVMLGTAIVMTT, HWVMAWIGFEMNMLAVIPILM, YFLTQATASMLLMLAIVINLV, IIMTLALAMKLGLAPFHFWVP, VQLSSGLILLTWQKLAPMSIL, INLDLLLLMSLLSILVGGWGG, IMAYSSIAHMGWMTAIMVYNP, MALLNLVIYILLTTTTFMMLM, LTTAILTIMLSLGGLPPLSGF, MIMPTIMAVMALLNLYFYMRL, and LSPLIILSTLILPLSPMLALL.

This sequence belongs to the complex I subunit 2 family. As to quaternary structure, core subunit of respiratory chain NADH dehydrogenase (Complex I) which is composed of 45 different subunits. Interacts with TMEM242.

Its subcellular location is the mitochondrion inner membrane. The catalysed reaction is a ubiquinone + NADH + 5 H(+)(in) = a ubiquinol + NAD(+) + 4 H(+)(out). Its function is as follows. Core subunit of the mitochondrial membrane respiratory chain NADH dehydrogenase (Complex I) which catalyzes electron transfer from NADH through the respiratory chain, using ubiquinone as an electron acceptor. Essential for the catalytic activity and assembly of complex I. This Nyctimene albiventer (Common tube-nosed fruit bat) protein is NADH-ubiquinone oxidoreductase chain 2.